The primary structure comprises 84 residues: Large ribosomal subunit protein bL27 (84 aa).

A disordered region spans residues Met1–Lys25.

Belongs to the bacterial ribosomal protein bL27 family.

This is Large ribosomal subunit protein bL27 from Sulfurovum sp. (strain NBC37-1).